Consider the following 625-residue polypeptide: Chaperone protein HtpG (625 aa).

Positions 1-332 (MSKKTNAPVQ…TEDLSLNVSR (332 aa)) are a; substrate-binding. The b stretch occupies residues 333 to 545 (EVVQSSPVMA…KDAMDSQMER (213 aa)). Residues 546–625 (MMKMMQQEMP…ELIEAATLSR (80 aa)) are c.

It belongs to the heat shock protein 90 family. As to quaternary structure, homodimer.

Its subcellular location is the cytoplasm. In terms of biological role, molecular chaperone. Has ATPase activity. The chain is Chaperone protein HtpG from Chlorobium phaeovibrioides (strain DSM 265 / 1930) (Prosthecochloris vibrioformis (strain DSM 265)).